Consider the following 218-residue polypeptide: MTQDEMKKAAAYAALEYVQPDSIVGVGTGSTVTHFIDALATIKDLIKGAVSSSDESTARLQSYGIDVFDLNEVSELSIYVDGADEINPYNHMIKGGGAALTREKIISAVAEKFICIVDNTKNVDILGDFPLPIEVIPMARSYVARELVKLGGDPVYRQGVVTDNGNVILDVHNLKIAEPLKLEAQINAIVGVVTNGLFANRAADVVLVGTPEGVKTLK.

Residues 28–31 (TGST), 81–84 (DGAD), and 94–97 (KGGG) contribute to the substrate site. The Proton acceptor role is filled by Glu-103. Residue Lys-121 participates in substrate binding.

It belongs to the ribose 5-phosphate isomerase family. Homodimer.

The catalysed reaction is aldehydo-D-ribose 5-phosphate = D-ribulose 5-phosphate. It functions in the pathway carbohydrate degradation; pentose phosphate pathway; D-ribose 5-phosphate from D-ribulose 5-phosphate (non-oxidative stage): step 1/1. Its function is as follows. Catalyzes the reversible conversion of ribose-5-phosphate to ribulose 5-phosphate. The protein is Ribose-5-phosphate isomerase A of Psychromonas ingrahamii (strain DSM 17664 / CCUG 51855 / 37).